Reading from the N-terminus, the 166-residue chain is UPF0304 protein VC_1871 (166 aa).

It belongs to the UPF0304 family.

The chain is UPF0304 protein VC_1871 from Vibrio cholerae serotype O1 (strain ATCC 39315 / El Tor Inaba N16961).